Consider the following 172-residue polypeptide: Large ribosomal subunit protein uL10 (172 aa).

This sequence belongs to the universal ribosomal protein uL10 family. In terms of assembly, part of the ribosomal stalk of the 50S ribosomal subunit. The N-terminus interacts with L11 and the large rRNA to form the base of the stalk. The C-terminus forms an elongated spine to which L12 dimers bind in a sequential fashion forming a multimeric L10(L12)X complex.

Its function is as follows. Forms part of the ribosomal stalk, playing a central role in the interaction of the ribosome with GTP-bound translation factors. This Rhizobium johnstonii (strain DSM 114642 / LMG 32736 / 3841) (Rhizobium leguminosarum bv. viciae) protein is Large ribosomal subunit protein uL10.